The primary structure comprises 171 residues: Shikimate kinase (171 aa).

14-19 contacts ATP; it reads GAGKST. A Mg(2+)-binding site is contributed by Ser-18. Substrate contacts are provided by Asp-36, Arg-60, and Gly-82. Arg-120 contributes to the ATP binding site. Arg-139 is a substrate binding site. Gln-156 is an ATP binding site.

This sequence belongs to the shikimate kinase family. In terms of assembly, monomer. It depends on Mg(2+) as a cofactor.

It is found in the cytoplasm. The catalysed reaction is shikimate + ATP = 3-phosphoshikimate + ADP + H(+). It functions in the pathway metabolic intermediate biosynthesis; chorismate biosynthesis; chorismate from D-erythrose 4-phosphate and phosphoenolpyruvate: step 5/7. Its function is as follows. Catalyzes the specific phosphorylation of the 3-hydroxyl group of shikimic acid using ATP as a cosubstrate. The protein is Shikimate kinase of Shewanella amazonensis (strain ATCC BAA-1098 / SB2B).